The following is a 156-amino-acid chain: Small ribosomal subunit protein uS7 (156 aa).

The protein belongs to the universal ribosomal protein uS7 family. In terms of assembly, part of the 30S ribosomal subunit. Contacts proteins S9 and S11.

Functionally, one of the primary rRNA binding proteins, it binds directly to 16S rRNA where it nucleates assembly of the head domain of the 30S subunit. Is located at the subunit interface close to the decoding center, probably blocks exit of the E-site tRNA. This Pseudomonas fluorescens (strain SBW25) protein is Small ribosomal subunit protein uS7.